The following is a 425-amino-acid chain: Histidine--tRNA ligase 1 (425 aa).

The protein belongs to the class-II aminoacyl-tRNA synthetase family. In terms of assembly, homodimer.

Its subcellular location is the cytoplasm. It catalyses the reaction tRNA(His) + L-histidine + ATP = L-histidyl-tRNA(His) + AMP + diphosphate + H(+). This chain is Histidine--tRNA ligase 1, found in Bacillus anthracis.